We begin with the raw amino-acid sequence, 735 residues long: Catalase-peroxidase (735 aa).

Positions methionine 1 to threonine 26 are enriched in polar residues. The disordered stretch occupies residues methionine 1–lysine 29. Positions tryptophan 100–tyrosine 223 form a cross-link, tryptophyl-tyrosyl-methioninium (Trp-Tyr) (with M-249). Histidine 101 serves as the catalytic Proton acceptor. The segment at residues tyrosine 223–methionine 249 is a cross-link (tryptophyl-tyrosyl-methioninium (Tyr-Met) (with W-100)). Histidine 264 serves as a coordination point for heme b.

It belongs to the peroxidase family. Peroxidase/catalase subfamily. Homodimer or homotetramer. The cofactor is heme b. Formation of the three residue Trp-Tyr-Met cross-link is important for the catalase, but not the peroxidase activity of the enzyme.

It carries out the reaction H2O2 + AH2 = A + 2 H2O. The enzyme catalyses 2 H2O2 = O2 + 2 H2O. Functionally, bifunctional enzyme with both catalase and broad-spectrum peroxidase activity. This Geobacillus thermodenitrificans (strain NG80-2) protein is Catalase-peroxidase.